A 269-amino-acid chain; its full sequence is Energy-coupling factor transporter ATP-binding protein EcfA1 (269 aa).

The region spanning 8-242 is the ABC transporter domain; the sequence is IVFKNVSFQY…AEELTTIGLD (235 aa). 42-49 provides a ligand contact to ATP; that stretch reads GHNGSGKS.

Belongs to the ABC transporter superfamily. Energy-coupling factor EcfA family. In terms of assembly, forms a stable energy-coupling factor (ECF) transporter complex composed of 2 membrane-embedded substrate-binding proteins (S component), 2 ATP-binding proteins (A component) and 2 transmembrane proteins (T component).

It localises to the cell membrane. Functionally, ATP-binding (A) component of a common energy-coupling factor (ECF) ABC-transporter complex. Unlike classic ABC transporters this ECF transporter provides the energy necessary to transport a number of different substrates. The polypeptide is Energy-coupling factor transporter ATP-binding protein EcfA1 (Staphylococcus aureus (strain MRSA252)).